A 467-amino-acid chain; its full sequence is Megakaryocyte-associated tyrosine-protein kinase (467 aa).

The interval 1-20 (MPTQRWAPGTQCMTKCENSR) is disordered. The region spanning 7–69 (APGTQCMTKC…AAAALRQREA (63 aa)) is the SH3 domain. An SH2 domain is found at 81-170 (WFHGKISGQE…AICTKLVKPK (90 aa)). Residues 194–443 (LTLGAQIGEG…IVEKLGRELR (250 aa)) enclose the Protein kinase domain. ATP-binding positions include 200–208 (IGEGEFGAV) and Lys-221. Asp-311 (proton acceptor) is an active-site residue. A disordered region spans residues 445-467 (VGVAAPAGGQEAEGSAPTRSQDP).

Belongs to the protein kinase superfamily. Tyr protein kinase family. CSK subfamily. As to quaternary structure, interacts with KIT. Enriched in lymphoid tissues.

Its subcellular location is the cytoplasm. It localises to the membrane. The enzyme catalyses L-tyrosyl-[protein] + ATP = O-phospho-L-tyrosyl-[protein] + ADP + H(+). Could play a significant role in the signal transduction of hematopoietic cells. May regulate tyrosine kinase activity of SRC-family members in brain. The chain is Megakaryocyte-associated tyrosine-protein kinase (Matk) from Rattus norvegicus (Rat).